A 160-amino-acid polypeptide reads, in one-letter code: Radiation-inducible immediate-early gene IEX-1 (160 aa).

Residues methionine 1 to isoleucine 35 form a disordered region. Topologically, residues methionine 1–arginine 85 are cytoplasmic. At serine 31 the chain carries Phosphoserine. The helical; Signal-anchor for type II membrane protein transmembrane segment at valine 86–glutamate 102 threads the bilayer. At glutamate 103 to leucine 153 the chain is on the extracellular side. Asparagine 137 carries an N-linked (GlcNAc...) asparagine glycan.

The protein belongs to the IER3 family. Interacts with the PPP2R5C-PP2A holoenzyme and ERK kinases; regulates ERK dephosphorylation. Glycosylated. In terms of tissue distribution, expressed predominantly in the lung, testes and the uterus.

It localises to the membrane. In terms of biological role, may play a role in the ERK signaling pathway by inhibiting the dephosphorylation of ERK by phosphatase PP2A-PPP2R5C holoenzyme. Also acts as an ERK downstream effector mediating survival. As a member of the NUPR1/RELB/IER3 survival pathway, may allow the development of pancreatic intraepithelial neoplasias. The protein is Radiation-inducible immediate-early gene IEX-1 (Ier3) of Mus musculus (Mouse).